Reading from the N-terminus, the 63-residue chain is Large ribosomal subunit protein eL37 (63 aa).

Zn(2+) is bound by residues Cys20, Cys23, Cys35, and Cys38. A C4-type zinc finger spans residues 20–38 (CRRCGRRAFNVKKGYCAAC).

This sequence belongs to the eukaryotic ribosomal protein eL37 family. In terms of assembly, part of the 50S ribosomal subunit. Zn(2+) serves as cofactor.

Its function is as follows. Binds to the 23S rRNA. This Thermococcus kodakarensis (strain ATCC BAA-918 / JCM 12380 / KOD1) (Pyrococcus kodakaraensis (strain KOD1)) protein is Large ribosomal subunit protein eL37.